We begin with the raw amino-acid sequence, 95 residues long: Large ribosomal subunit protein bL25 (95 aa).

This sequence belongs to the bacterial ribosomal protein bL25 family. In terms of assembly, part of the 50S ribosomal subunit; part of the 5S rRNA/L5/L18/L25 subcomplex. Contacts the 5S rRNA. Binds to the 5S rRNA independently of L5 and L18.

Functionally, this is one of the proteins that binds to the 5S RNA in the ribosome where it forms part of the central protuberance. The chain is Large ribosomal subunit protein bL25 from Shewanella piezotolerans (strain WP3 / JCM 13877).